The following is a 167-amino-acid chain: UPF0114 protein in repA1-repA2 intergenic region (167 aa).

Transmembrane regions (helical) follow at residues 15-35 (LMFPVYVGLSFGFILLTLKFF), 53-73 (LVLAVLSLIDIALVGGLLVMV), and 136-156 (IMLCVIIRLTFVLSAFGMAYI).

It belongs to the UPF0114 family.

It is found in the cell membrane. The sequence is that of UPF0114 protein in repA1-repA2 intergenic region from Buchnera aphidicola subsp. Schizaphis graminum (strain Sg).